We begin with the raw amino-acid sequence, 261 residues long: MRDSFLQKAIASAKDRTSLLEEIAGNCSPKPGRPSLSSSIREWVYRVGGAVIAEYKRCSPSAGAISTLDPVSYVQATRDASAAYSVLTEPNWFCGSIELIPYFARYKPVLAKDFIVSETQIRIAACMGASAALLIMEALTPRELQELAAAASRYGVEVLVETPDASHAVEASRLAPGSIIGVNSRDLKTLRVDYEAMLREVSKAREQLPGEVILVAESGIDSPDKALKAFKAGAQAILVGTAFMKNPQLREKILAELLQIP.

Belongs to the TrpC family.

It catalyses the reaction 1-(2-carboxyphenylamino)-1-deoxy-D-ribulose 5-phosphate + H(+) = (1S,2R)-1-C-(indol-3-yl)glycerol 3-phosphate + CO2 + H2O. It functions in the pathway amino-acid biosynthesis; L-tryptophan biosynthesis; L-tryptophan from chorismate: step 4/5. This is Indole-3-glycerol phosphate synthase (trpC) from Aeropyrum pernix (strain ATCC 700893 / DSM 11879 / JCM 9820 / NBRC 100138 / K1).